A 125-amino-acid polypeptide reads, in one-letter code: UPF0251 protein Dhaf_1981 (125 aa).

Belongs to the UPF0251 family.

The chain is UPF0251 protein Dhaf_1981 from Desulfitobacterium hafniense (strain DSM 10664 / DCB-2).